The chain runs to 1300 residues: CRISPR-associated endonuclease Cas12a (1300 aa).

Residues 1–24 form a wedge region 1 region; the sequence is MSIYQEFVNKYSLSKTLRFELIPQ. 2 recognition domain regions span residues 25 to 339 and 340 to 591; these read GKTL…SFVI and DKLE…QKPY. Binds crRNA alone and in crRNA-target DNA heteroduplex stretches follow at residues 47-51 and 182-186; these read YKKAK and FHENR. Positions 301–305 are binds DNA in crRNA-target DNA heteroduplex; sequence NEYIN. 2 binds crRNA in crRNA-target DNA heteroduplex regions span residues 326 to 329 and 538 to 541; these read KQIL and HKLK. A binds crRNA region spans residues 591–595; the sequence is YSDEK. The tract at residues 592-662 is wedge region 2; that stretch reads SDEKFKLNFE…GYKKIVYKLL (71 aa). The tract at residues 662 to 679 is LKL, important for PAM recognition and DNA unwinding; sequence LPGANKMLPKVFFSAKSI. Residues 663–762 form a PAM-interacting domain (PI) region; that stretch reads PGANKMLPKV…FYREVENQGY (100 aa). Positions 671–677 are binds DNA protospacer adjacent motif (PAM) on target DNA; the sequence is KVFFSAK. Residues 692–704 form a binds single-strand non-target DNA region; that stretch reads RNHSTHTKNGSPQ. The interval 763 to 892 is wedge region 3; that stretch reads KLTFENISES…PITINFKSSG (130 aa). Binds crRNA regions lie at residues 791–794 and 803–804; these read KDFS and LH. Active-site for pre-crRNA processing residues include His843, Lys852, and Lys869. Binds crRNA regions lie at residues 851–853 and 865–873; these read NKN and YDLIKDKRF. The segment at 893 to 953 is ruvC-I; the sequence is ANKFNDEINL…IGNDRMKTNY (61 aa). The For DNase activity of RuvC domain role is filled by Asp917. Positions 954-971 are bridge helix; it reads HDKLAAIEKDRDSARKDW. Residues 972 to 1078 are ruvC-II; sequence KKINNIKEMK…KQTGIIYYVP (107 aa). Residue Glu1006 is the For DNase activity of RuvC domain of the active site. Residues 1079 to 1254 form a nuclease domain region; sequence AGFTSKICPV…QAPKNMPQDA (176 aa). Asp1255 serves as the catalytic For DNase activity of RuvC domain. Positions 1255–1300 are ruvC-III; the sequence is DANGAYHIGLKGLMLLGRIKNNQEGKKLNLVIKNEEYFEFVQNRNN.

It belongs to the CRISPR-associated endonuclease Cas12a family. In terms of assembly, might be a homodimer. Might be a monomer. Ca(2+) is required as a cofactor. Requires Mg(2+) as cofactor.

The catalysed reaction is Endonucleolytic cleavage to 5'-phosphodinucleotide and 5'-phosphooligonucleotide end-products.. It catalyses the reaction RNA = a 5'-hydroxy-ribonucleotide + n nucleoside-2',3'-cyclophosphates.. Its function is as follows. CRISPR (clustered regularly interspaced short palindromic repeat), is an adaptive immune system that provides protection against mobile genetic elements (viruses, transposable elements and conjugative plasmids). CRISPR clusters contain sequences complementary to antecedent mobile elements and target invading nucleic acids. CRISPR clusters are transcribed and processed into CRISPR RNA (crRNA). Has endonuclease activity on pre-crRNA and dsDNA, using different active sites. A single-RNA guided endonuclease that is also capable of guiding crRNA processing; correct processing of pre-crRNA requires only this protein and the CRISPR locus. pre-crRNA processing proceeds by an intramolecular nucleophilic attack on the scissile phosphate by the 2'-OH of the upstream ribonucleotide, the divalent cation (which is bound by the crRNA) is probably required for ordering the crRNA pseudoknot and/or increasing RNA binding. RNA mutagenesis studies show pre-crRNA cleavage is highly sequence- and structure-specific. Forms a complex with crRNA and complementary dsDNA, where the crRNA displaces the non-target DNA strand and directs endonucleolytic cleavage of both strands of the DNA. Cleavage results in staggered 5-base 5' overhangs 14-18 and 21-23 bases downstream of the PAM (protospacer adjacent motif) on the non-target and target strands respectively. Both target and non-target strand DNA are probably independently cleaved in the same active site. When this protein is expressed in E.coli it prevents plasmids homologous to the first CRISPR spacer from transforming, formally showing it is responsible for plasmid immunity. The sequence is that of CRISPR-associated endonuclease Cas12a from Francisella tularensis subsp. novicida (strain U112).